Here is a 313-residue protein sequence, read N- to C-terminus: Malate dehydrogenase (313 aa).

NAD(+) contacts are provided by residues 8-13 (GAGNVG) and D33. 2 residues coordinate substrate: R83 and R89. NAD(+) is bound by residues N96 and 119–121 (ISN). 2 residues coordinate substrate: N121 and R152. H176 (proton acceptor) is an active-site residue.

It belongs to the LDH/MDH superfamily. MDH type 3 family.

The enzyme catalyses (S)-malate + NAD(+) = oxaloacetate + NADH + H(+). In terms of biological role, catalyzes the reversible oxidation of malate to oxaloacetate. The sequence is that of Malate dehydrogenase from Bacteroides fragilis (strain ATCC 25285 / DSM 2151 / CCUG 4856 / JCM 11019 / LMG 10263 / NCTC 9343 / Onslow / VPI 2553 / EN-2).